A 1004-amino-acid polypeptide reads, in one-letter code: Cadmium/zinc-transporting ATPase HMA3 (1004 aa).

The HMA domain maps to 42 to 108; sequence KKTYLDVLGV…ALNKAGLEAS (67 aa). Transmembrane regions (helical) follow at residues 120–140, 144–164, 171–191, 193–213, 340–360, 371–391, 683–703, and 707–727; these read RWPS…FFEW, PLQC…VRRG, LSLD…CLGD, TEAG…TLAC, CAKY…LIPA, WKLA…LSTP, IAVN…LAAA, and VLWA…LNSM. The disordered stretch occupies residues 931 to 952; it reads TGCGASKRSPPAEGSCSGGEGG.

It belongs to the cation transport ATPase (P-type) (TC 3.A.3) family. Type IB subfamily. In terms of tissue distribution, specifically expressed in roots.

It localises to the vacuole membrane. The enzyme catalyses Zn(2+)(in) + ATP + H2O = Zn(2+)(out) + ADP + phosphate + H(+). The catalysed reaction is Cd(2+)(in) + ATP + H2O = Cd(2+)(out) + ADP + phosphate + H(+). Functionally, root-specific cadmium (Cd) transporter that mediates Cd efflux in root vacuoles. Involved in Cd detoxification by sequestrating Cd into root vacuoles and limiting translocation of Cd from the roots to the shoots, and accumulation in grains. This Oryza sativa subsp. japonica (Rice) protein is Cadmium/zinc-transporting ATPase HMA3.